The primary structure comprises 253 residues: 5-oxoprolinase subunit A (253 aa).

The protein belongs to the LamB/PxpA family. As to quaternary structure, forms a complex composed of PxpA, PxpB and PxpC.

It carries out the reaction 5-oxo-L-proline + ATP + 2 H2O = L-glutamate + ADP + phosphate + H(+). In terms of biological role, catalyzes the cleavage of 5-oxoproline to form L-glutamate coupled to the hydrolysis of ATP to ADP and inorganic phosphate. The polypeptide is 5-oxoprolinase subunit A (Bacillus cereus (strain Q1)).